Here is a 267-residue protein sequence, read N- to C-terminus: MVFEEFNNFDEAFSALLSKLDFKINEPFNDVKKVLCIEPHPDDCAIGLGGTIKKLTDSGIDVVYLLLTDGSMGTTDGEVSGHELALRRLEEEKRSAEILGVKKIHALDFGDTELPYTREVRKEIVTVIRKERPGIVLMPDPWLPYEGHPDHRHAGFLGIEAVSFAGLPNFNRSDLIAGLDPHSIQAVGFYYTHKPNYFVDISDVMEVKLRAVRTHESQFPEDVWELWEPYLRTIALYYGKMSGHRYAEGIRFVPGIFLHICPFAHVI.

The protein belongs to the PIGL family. Homohexamer.

The protein localises to the cytoplasm. The enzyme catalyses N,N'-diacetylchitobiose + H2O = beta-D-glucosaminyl-(1-&gt;4)-N-acetyl-D-glucosamine + acetate. It functions in the pathway glycan degradation; chitin degradation. Functionally, deacylates the non-reducing end of diacetylchitobiose (GlcNAc2). Can also use N-acetylglucosamine (GlcNAc) and N-acetylchitotriose (GlcNAc3). Probably involved in chitin degradation. The chain is Diacetylchitobiose deacetylase (dac) from Thermococcus kodakarensis (strain ATCC BAA-918 / JCM 12380 / KOD1) (Pyrococcus kodakaraensis (strain KOD1)).